The primary structure comprises 556 residues: Endoplasmic reticulum membrane protein 65 (556 aa).

Topologically, residues 1-87 (MQHKDTAVAK…IRIPMFLEKF (87 aa)) are cytoplasmic. Ser-22 bears the Phosphoserine mark. A helical transmembrane segment spans residues 88–108 (MLFALLTSLDCFLYYFTVLPI). The Lumenal portion of the chain corresponds to 109-151 (RLIKGYVKQFKSYRQHYRLQQRSGHKNKIPFRYRITSREYKER). The chain crosses the membrane as a helical span at residues 152-172 (CMIFIIVISSILLSKLDTSKL). At 173–224 (YHRIKRQSTMKLYMLFSVLEMADKMLASLGQSLLTVMLSRKNSERILLHKCL) the chain is on the cytoplasmic side. A helical membrane pass occupies residues 225–245 (LVSMSLTYVTIHGYVLVYQAI). Residues 246-330 (SLNIAVNSYS…INFWSPRSTL (85 aa)) are Lumenal-facing. N-linked (GlcNAc...) asparagine glycosylation occurs at Asn-318. Residues 331–351 (SIVINILCGPMVSVVGSEVLV) traverse the membrane as a helical segment. Residues 352 to 391 (DWAKHAYITKFNRIRPQIYDKFYYIIYKDYSTRTHKLEDR) are Cytoplasmic-facing. Residues 392 to 412 (LGLPLPAFVVLFIVMVRPTLF) traverse the membrane as a helical segment. At 413 to 428 (KSSEPSYLPSLFRILF) the chain is on the lumenal side. Residues 429–449 (MGASVFLLALLAKFTLDLILI) traverse the membrane as a helical segment. Topologically, residues 450–556 (KWSKRIEQRF…RYKMVSKRIW (107 aa)) are cytoplasmic.

Belongs to the TAPT1 family. In terms of assembly, interacts with SLP1.

Its subcellular location is the endoplasmic reticulum membrane. The protein localises to the mitochondrion. Its function is as follows. May be involved in membrane protein folding. This chain is Endoplasmic reticulum membrane protein 65, found in Saccharomyces cerevisiae (strain ATCC 204508 / S288c) (Baker's yeast).